Consider the following 298-residue polypeptide: METEISGMDNPAMTLDEVSMERNKSFVKALQELKNLRPQLYSAADYCEKSYLHSEQKQMVLDNLKDYTVKALVNAVDHLGTVASKLTDLFDHQNSDISTMEMRASCVSQQLLTCRTYIDKEGLRQQQLLAVIPLHHKHYILPNSVNKRVHFSPLRRTDTRQNHYQAISRLQPSDAPASKSLSWHLGSETKSTLKGTSTVAPSSKDSKAFSKTSGVFHLLGDDENIANKKPLAGSQVSGVPAASTAHKDLEVPKLLTAHRSLDNNPRREIIQAPVRTKSVLSAFFVKQKTPKLKAGYVS.

Belongs to the ABI family. Binds SCAR2. Expressed in seedlings, roots, hypocotyls, cotyledons, leaves, stems, and flowers.

It is found in the cytoplasm. The protein resides in the cytoskeleton. Involved in regulation of actin and microtubule organization. Part of a WAVE complex that activates the Arp2/3 complex. This chain is Protein ABIL1 (ABIL1), found in Arabidopsis thaliana (Mouse-ear cress).